Here is a 414-residue protein sequence, read N- to C-terminus: BICD family-like cargo adapter 2 (414 aa).

Positions 34-341 (GQALLEKNEE…DALNQQLLNT (308 aa)) form a coiled coil. Residues 372–384 (QEKEKENNKERTG) show a composition bias toward basic and acidic residues. Positions 372–399 (QEKEKENNKERTGFQRGTRTTKSLRLRG) are disordered.

The chain is BICD family-like cargo adapter 2 (bicdl2) from Danio rerio (Zebrafish).